The following is a 567-amino-acid chain: MAQRIFTLILLLCSTSAFAGLFDAPGRSQFVPADRAFVFDFQQNQHDLTLSWQVKEGYYLYRKQISITPTKADIAAVQLPAGVWHEDEFYGKSEIYRKRLNVPVTVNQAAAGATLTVTYQGCADAGFCYPPETKTVPLSEVAAAIDATPTPAVTQTGETSKPAAQLPFSALWALLIGIGIAFTPCVLPMYPLISGIVLGGRQRLSTGRALLLAFIYVQGMALTYTALGLVVAAAGLQFQAALQHPYVLIGLAIVFTLLALSMFGLFTLQLPSSLQTRLTLMSNRQQGGSPGGVFVMGAIAGLICSPCTTAPLSAILLYIAQSGNMWLGGGTLYLYALGMGLPLMLVTVFGNRLLPKSGPWMAHVKTAFGFVILALPVFLLERIIGEAWGLRLWSLLGVAFFGWAFITSLQARRAWMRIVQIILLAAALISVRPLQDWAFGSPSAQAPAHLNFTAISTVDELNQALAQAKGKPVMLDFYADWCVACKEFEKYTFSDPRVQQALGDTVLLQANVTANNAQDVALLKHLQVLGLPTILFFDAQGQEQPQARVTGFMDAATFSAHLHDRQP.

A signal peptide spans 1-19 (MAQRIFTLILLLCSTSAFA). Intrachain disulfides connect cysteine 122–cysteine 128 and cysteine 185–cysteine 307. 8 consecutive transmembrane segments (helical) span residues 166–186 (LPFS…TPCV), 211–231 (LLAF…GLVV), 246–266 (YVLI…FGLF), 299–319 (IAGL…LLYI), 326–346 (WLGG…LMLV), 360–380 (WMAH…VFLL), 387–407 (AWGL…AFIT), and 418–438 (IVQI…QDWA). The Thioredoxin domain occupies 435 to 567 (QDWAFGSPSA…FSAHLHDRQP (133 aa)). Cysteine 482 and cysteine 485 are oxidised to a cystine.

The protein belongs to the thioredoxin family. DsbD subfamily.

The protein localises to the cell inner membrane. It carries out the reaction [protein]-dithiol + NAD(+) = [protein]-disulfide + NADH + H(+). The enzyme catalyses [protein]-dithiol + NADP(+) = [protein]-disulfide + NADPH + H(+). In terms of biological role, required to facilitate the formation of correct disulfide bonds in some periplasmic proteins and for the assembly of the periplasmic c-type cytochromes. Acts by transferring electrons from cytoplasmic thioredoxin to the periplasm. This transfer involves a cascade of disulfide bond formation and reduction steps. The polypeptide is Thiol:disulfide interchange protein DsbD (Salmonella paratyphi A (strain ATCC 9150 / SARB42)).